Here is a 58-residue protein sequence, read N- to C-terminus: ADVPGNYPLDKDGNTYTCLELGENKDCQKVCKLHGVQYGYCYAFSCWCKEYLDDKDSV.

The LCN-type CS-alpha/beta domain maps to 3-58 (VPGNYPLDKDGNTYTCLELGENKDCQKVCKLHGVQYGYCYAFSCWCKEYLDDKDSV). Disulfide bonds link C18/C41, C27/C46, and C31/C48.

As to expression, expressed by the venom gland.

The protein resides in the secreted. Beta toxins bind voltage-independently at site-4 of sodium channels (Nav) and shift the voltage of activation toward more negative potentials thereby affecting sodium channel activation and promoting spontaneous and repetitive firing. In mice, causes intense writhing. The protein is Bestoxin of Parabuthus transvaalicus (Transvaal thick-tailed scorpion).